We begin with the raw amino-acid sequence, 567 residues long: Proline--tRNA ligase (567 aa).

The protein belongs to the class-II aminoacyl-tRNA synthetase family. ProS type 1 subfamily. Homodimer.

It localises to the cytoplasm. The enzyme catalyses tRNA(Pro) + L-proline + ATP = L-prolyl-tRNA(Pro) + AMP + diphosphate. Catalyzes the attachment of proline to tRNA(Pro) in a two-step reaction: proline is first activated by ATP to form Pro-AMP and then transferred to the acceptor end of tRNA(Pro). As ProRS can inadvertently accommodate and process non-cognate amino acids such as alanine and cysteine, to avoid such errors it has two additional distinct editing activities against alanine. One activity is designated as 'pretransfer' editing and involves the tRNA(Pro)-independent hydrolysis of activated Ala-AMP. The other activity is designated 'posttransfer' editing and involves deacylation of mischarged Ala-tRNA(Pro). The misacylated Cys-tRNA(Pro) is not edited by ProRS. This chain is Proline--tRNA ligase, found in Campylobacter fetus subsp. fetus (strain 82-40).